A 415-amino-acid chain; its full sequence is Lipoyl synthase, mitochondrial (415 aa).

The transit peptide at 1-32 (MAASTNRLRFLYSSARTVPQTGSITPISRRTY) directs the protein to the mitochondrion. Positions 20–32 (QTGSITPISRRTY) are enriched in polar residues. The interval 20-53 (QTGSITPISRRTYATTEPSPSATGAPATARKRTN) is disordered. A compositionally biased stretch (low complexity) spans 33 to 47 (ATTEPSPSATGAPAT). Positions 132, 137, 143, 163, 167, 170, and 378 each coordinate [4Fe-4S] cluster. The 222-residue stretch at 146–367 (GSDKSAATAT…RQRALDMGFL (222 aa)) folds into the Radical SAM core domain. Positions 395–415 (AAGTAGESVTDSKAAVDEATR) are disordered.

It belongs to the radical SAM superfamily. Lipoyl synthase family. [4Fe-4S] cluster is required as a cofactor.

Its subcellular location is the mitochondrion. The catalysed reaction is [[Fe-S] cluster scaffold protein carrying a second [4Fe-4S](2+) cluster] + N(6)-octanoyl-L-lysyl-[protein] + 2 oxidized [2Fe-2S]-[ferredoxin] + 2 S-adenosyl-L-methionine + 4 H(+) = [[Fe-S] cluster scaffold protein] + N(6)-[(R)-dihydrolipoyl]-L-lysyl-[protein] + 4 Fe(3+) + 2 hydrogen sulfide + 2 5'-deoxyadenosine + 2 L-methionine + 2 reduced [2Fe-2S]-[ferredoxin]. Its pathway is protein modification; protein lipoylation via endogenous pathway; protein N(6)-(lipoyl)lysine from octanoyl-[acyl-carrier-protein]: step 2/2. Functionally, catalyzes the radical-mediated insertion of two sulfur atoms into the C-6 and C-8 positions of the octanoyl moiety bound to the lipoyl domains of lipoate-dependent enzymes, thereby converting the octanoylated domains into lipoylated derivatives. The chain is Lipoyl synthase, mitochondrial from Aspergillus flavus (strain ATCC 200026 / FGSC A1120 / IAM 13836 / NRRL 3357 / JCM 12722 / SRRC 167).